Consider the following 161-residue polypeptide: SsrA-binding protein (161 aa).

This sequence belongs to the SmpB family.

The protein resides in the cytoplasm. Required for rescue of stalled ribosomes mediated by trans-translation. Binds to transfer-messenger RNA (tmRNA), required for stable association of tmRNA with ribosomes. tmRNA and SmpB together mimic tRNA shape, replacing the anticodon stem-loop with SmpB. tmRNA is encoded by the ssrA gene; the 2 termini fold to resemble tRNA(Ala) and it encodes a 'tag peptide', a short internal open reading frame. During trans-translation Ala-aminoacylated tmRNA acts like a tRNA, entering the A-site of stalled ribosomes, displacing the stalled mRNA. The ribosome then switches to translate the ORF on the tmRNA; the nascent peptide is terminated with the 'tag peptide' encoded by the tmRNA and targeted for degradation. The ribosome is freed to recommence translation, which seems to be the essential function of trans-translation. The protein is SsrA-binding protein of Mycolicibacterium smegmatis (strain ATCC 700084 / mc(2)155) (Mycobacterium smegmatis).